Consider the following 286-residue polypeptide: Shikimate dehydrogenase (NADP(+)) (286 aa).

Shikimate is bound by residues 22–24 (SFS) and T69. K73 serves as the catalytic Proton acceptor. E85 contributes to the NADP(+) binding site. Shikimate is bound by residues N94 and D109. NADP(+) contacts are provided by residues 133 to 137 (GAGGA), 157 to 162 (NRTIDK), and L231. Y233 contributes to the shikimate binding site. G254 contacts NADP(+).

It belongs to the shikimate dehydrogenase family. Homodimer.

The enzyme catalyses shikimate + NADP(+) = 3-dehydroshikimate + NADPH + H(+). It participates in metabolic intermediate biosynthesis; chorismate biosynthesis; chorismate from D-erythrose 4-phosphate and phosphoenolpyruvate: step 4/7. Involved in the biosynthesis of the chorismate, which leads to the biosynthesis of aromatic amino acids. Catalyzes the reversible NADPH linked reduction of 3-dehydroshikimate (DHSA) to yield shikimate (SA). This is Shikimate dehydrogenase (NADP(+)) from Alkaliphilus oremlandii (strain OhILAs) (Clostridium oremlandii (strain OhILAs)).